Here is a 432-residue protein sequence, read N- to C-terminus: Transcobalamin-2 (432 aa).

An N-terminal signal peptide occupies residues 1–18 (MGHLGALLFLLGGLGALA). 3 disulfides stabilise this stretch: cysteine 21/cysteine 270, cysteine 116/cysteine 312, and cysteine 165/cysteine 208. Asparagine 94 carries N-linked (GlcNAc...) asparagine glycosylation. Cob(II)alamin contacts are provided by residues glutamine 104, 152–156 (TSYYQ), histidine 193, 193–197 (HVSVD), asparagine 245, serine 248, glutamine 294, and 400–402 (WQV).

Belongs to the eukaryotic cobalamin transport proteins family. In terms of assembly, interacts with CD320 (via LDL-receptor class A domains). Expressed in mammary gland, kidney, lymphatic nodes and liver.

It localises to the secreted. Its function is as follows. Primary vitamin B12-binding and transport protein. Delivers cobalamin to cells. The sequence is that of Transcobalamin-2 (TCN2) from Bos taurus (Bovine).